A 435-amino-acid polypeptide reads, in one-letter code: Serine--tRNA ligase (435 aa).

An L-serine-binding site is contributed by 242-244 (TAE). Residue 273-275 (RSE) coordinates ATP. L-serine is bound at residue glutamate 296. ATP is bound at residue 360-363 (EISS). L-serine is bound at residue serine 396.

It belongs to the class-II aminoacyl-tRNA synthetase family. Type-1 seryl-tRNA synthetase subfamily. In terms of assembly, homodimer. The tRNA molecule binds across the dimer.

It is found in the cytoplasm. The catalysed reaction is tRNA(Ser) + L-serine + ATP = L-seryl-tRNA(Ser) + AMP + diphosphate + H(+). The enzyme catalyses tRNA(Sec) + L-serine + ATP = L-seryl-tRNA(Sec) + AMP + diphosphate + H(+). It functions in the pathway aminoacyl-tRNA biosynthesis; selenocysteinyl-tRNA(Sec) biosynthesis; L-seryl-tRNA(Sec) from L-serine and tRNA(Sec): step 1/1. Its function is as follows. Catalyzes the attachment of serine to tRNA(Ser). Is also able to aminoacylate tRNA(Sec) with serine, to form the misacylated tRNA L-seryl-tRNA(Sec), which will be further converted into selenocysteinyl-tRNA(Sec). This is Serine--tRNA ligase from Vibrio vulnificus (strain CMCP6).